Reading from the N-terminus, the 317-residue chain is Ribose-phosphate pyrophosphokinase (317 aa).

Residues 43–45 and 102–103 contribute to the ATP site; these read DGE and RQ. His136 and Asp175 together coordinate Mg(2+). The active site involves Lys198. D-ribose 5-phosphate contacts are provided by residues Arg200, Asp224, and 228-232; that span reads DTAGT.

This sequence belongs to the ribose-phosphate pyrophosphokinase family. Class I subfamily. As to quaternary structure, homohexamer. Mg(2+) is required as a cofactor.

The protein resides in the cytoplasm. The enzyme catalyses D-ribose 5-phosphate + ATP = 5-phospho-alpha-D-ribose 1-diphosphate + AMP + H(+). It participates in metabolic intermediate biosynthesis; 5-phospho-alpha-D-ribose 1-diphosphate biosynthesis; 5-phospho-alpha-D-ribose 1-diphosphate from D-ribose 5-phosphate (route I): step 1/1. In terms of biological role, involved in the biosynthesis of the central metabolite phospho-alpha-D-ribosyl-1-pyrophosphate (PRPP) via the transfer of pyrophosphoryl group from ATP to 1-hydroxyl of ribose-5-phosphate (Rib-5-P). The sequence is that of Ribose-phosphate pyrophosphokinase from Oceanobacillus iheyensis (strain DSM 14371 / CIP 107618 / JCM 11309 / KCTC 3954 / HTE831).